A 371-amino-acid chain; its full sequence is Ferrochelatase (371 aa).

The Fe cation site is built by H218 and E299.

The protein belongs to the ferrochelatase family.

Its subcellular location is the cytoplasm. The catalysed reaction is heme b + 2 H(+) = protoporphyrin IX + Fe(2+). It functions in the pathway porphyrin-containing compound metabolism; protoheme biosynthesis; protoheme from protoporphyrin-IX: step 1/1. Catalyzes the ferrous insertion into protoporphyrin IX. The polypeptide is Ferrochelatase (Cupriavidus taiwanensis (strain DSM 17343 / BCRC 17206 / CCUG 44338 / CIP 107171 / LMG 19424 / R1) (Ralstonia taiwanensis (strain LMG 19424))).